Consider the following 391-residue polypeptide: UPF0229 protein CLH_2838 (391 aa).

2 disordered regions span residues 1-23 (MAIF…DKRR) and 75-107 (VATG…GNEE). Basic and acidic residues predominate over residues 80–92 (GEEKRGDKIESGS).

Belongs to the UPF0229 family.

In Clostridium botulinum (strain Alaska E43 / Type E3), this protein is UPF0229 protein CLH_2838.